A 165-amino-acid polypeptide reads, in one-letter code: Cytochrome c-type biogenesis protein CcmE (165 aa).

The Cytoplasmic portion of the chain corresponds to 1-29 (MSATAEQNARNPKGKGGFARTVSQRKRKR). A helical; Signal-anchor for type II membrane protein membrane pass occupies residues 30–50 (LFLIGGALAVLAVAVGLMLTA). At 51 to 165 (FNQDIRFFRT…LKKKGVWEGK (115 aa)) the chain is on the periplasmic side. Heme-binding residues include His143 and Tyr147.

Belongs to the CcmE/CycJ family.

It is found in the cell inner membrane. In terms of biological role, heme chaperone required for the biogenesis of c-type cytochromes. Transiently binds heme delivered by CcmC and transfers the heme to apo-cytochromes in a process facilitated by CcmF and CcmH. The chain is Cytochrome c-type biogenesis protein CcmE from Brucella abortus (strain S19).